Consider the following 94-residue polypeptide: Small ribosomal subunit protein bS6 (94 aa).

Belongs to the bacterial ribosomal protein bS6 family.

Functionally, binds together with bS18 to 16S ribosomal RNA. In Clostridium botulinum (strain Kyoto / Type A2), this protein is Small ribosomal subunit protein bS6.